We begin with the raw amino-acid sequence, 1121 residues long: Putative ATP-dependent RNA helicase ECM32 (1121 aa).

The disordered stretch occupies residues Asn157–Lys187. The span at Arg160 to Lys184 shows a compositional bias: basic residues. A Phosphoserine modification is found at Ser227. The disordered stretch occupies residues Ala233–Lys452. Basic residues predominate over residues Asn251 to Asn263. Positions Ile278 to Pro287 are enriched in polar residues. The span at Gly307–Gln316 shows a compositional bias: basic and acidic residues. A compositionally biased stretch (low complexity) spans Leu323–Leu336. Over residues Asp342 to Lys363 the composition is skewed to basic and acidic residues. The segment covering Lys376–Lys413 has biased composition (polar residues). Residue Ser392 is modified to Phosphoserine. Basic and acidic residues predominate over residues Leu426–Lys452. Thr465 is subject to Phosphothreonine. An ATP-binding site is contributed by Gly670 to Thr677.

This sequence belongs to the DNA2/NAM7 helicase family. Interacts with the peptidyl release factors SUP35 and weakly with SUP45.

It localises to the cytoplasm. The catalysed reaction is ATP + H2O = ADP + phosphate + H(+). Probable RNA helicase, which may be involved in modulation of the translation termination process. Probably unwinds double-stranded RNA. In vitro, unwinds covalently closed, circular DNA in the presence of a DNA topoisomerase TOP1 and replication factor-A protein RFA1. The sequence is that of Putative ATP-dependent RNA helicase ECM32 (ECM32) from Saccharomyces cerevisiae (strain ATCC 204508 / S288c) (Baker's yeast).